The chain runs to 454 residues: Septin-10 (454 aa).

One can recognise a Septin-type G domain in the interval 63-329; that stretch reads QGFCFNILCV…ELYRRCKLEE (267 aa). The interval 73–80 is G1 motif; sequence GETGIGKS. GTP contacts are provided by residues 73–80, Gly-128, 209–217, Gly-263, and Arg-278; these read GETGIGKS and KADTVSKTE. The segment at 125 to 128 is G3 motif; the sequence is NTVG. The segment at 208–211 is G4 motif; that stretch reads AKAD.

Belongs to the TRAFAC class TrmE-Era-EngA-EngB-Septin-like GTPase superfamily. Septin GTPase family. Septins polymerize into heterooligomeric protein complexes that form filaments, and can associate with cellular membranes, actin filaments and microtubules. GTPase activity is required for filament formation. Interacts with ADGB. In terms of processing, proteolytically cleaved in vitro in a calmodulin-dependent manner. In terms of tissue distribution, widely expressed. Abundantly expressed in heart and kidney, placenta, skeletal muscles, liver and lung, as well as various tumor cell lines.

The protein localises to the cytoplasm. The protein resides in the cytoskeleton. It is found in the cell projection. Its subcellular location is the cilium. It localises to the flagellum. Its function is as follows. Filament-forming cytoskeletal GTPase. May play a role in cytokinesis (Potential). This is Septin-10 from Homo sapiens (Human).